A 544-amino-acid chain; its full sequence is Probable protein kinase UbiB (544 aa).

Residues 1–21 traverse the membrane as a helical segment; the sequence is MIFGELRRLYLIIGVMLSYGL. Residues 123–500 form the Protein kinase domain; that stretch reads DFQQEPLASA…HVRQSQSRFL (378 aa). Residues 129–137 and lysine 151 contribute to the ATP site; that span reads LASASIAQV. Residue aspartate 286 is the Proton acceptor of the active site. 2 consecutive transmembrane segments (helical) span residues 499 to 519 and 520 to 540; these read FLFG…TQGA and DEGS…IIGW.

It belongs to the ABC1 family. UbiB subfamily.

It is found in the cell inner membrane. Its pathway is cofactor biosynthesis; ubiquinone biosynthesis [regulation]. Is probably a protein kinase regulator of UbiI activity which is involved in aerobic coenzyme Q (ubiquinone) biosynthesis. This is Probable protein kinase UbiB from Sodalis glossinidius (strain morsitans).